The sequence spans 1486 residues: Rap guanine nucleotide exchange factor 2 (1486 aa).

Disordered stretches follow at residues 40–59 and 68–101; these read HVSS…SSSL and SEAG…SDPL. Over residues 83 to 94 the composition is skewed to acidic residues; the sequence is VDSEDDDDEEDI. Residue 135–252 participates in a nucleoside 3',5'-cyclic phosphate binding; that stretch reads AFANMTMSVR…QKVEEEGEIV (118 aa). In terms of domain architecture, N-terminal Ras-GEF spans 267–380; sequence KGHIVIKGTS…RLLNIACAAK (114 aa). One can recognise a PDZ domain in the interval 385 to 468; that stretch reads LMTLTKPARE…LSITVKTNLF (84 aa). The residue at position 501 (Ser-501) is a Phosphoserine. The 87-residue stretch at 606–692 folds into the Ras-associating domain; the sequence is PDQVLRVFKA…GRYYLKNNME (87 aa). At Thr-644 the chain carries Phosphothreonine. The Ras-GEF domain occupies 717–944; sequence STVEVATQLS…SQGSTNATVL (228 aa). Ser-806, Ser-930, Ser-933, and Ser-1022 each carry phosphoserine. Positions 1002–1049 are disordered; the sequence is PATNTLPKNPTDKKPVKSETSPVAPRAGLQPKAQPQPQPPQPPHKLNQ. Positions 1035-1044 are enriched in pro residues; sequence QPQPQPPQPP. Phosphoserine occurs at positions 1077, 1086, 1092, 1113, 1117, 1156, and 1173. Disordered regions lie at residues 1090 to 1176, 1221 to 1254, 1303 to 1357, and 1391 to 1486; these read EGSL…SVSI, PSTE…SGSH, KYSR…DSSS, and GRYR…VSAV. Composition is skewed to low complexity over residues 1105 to 1122 and 1138 to 1159; these read SNTS…QSSP and SDSG…SFDS. Composition is skewed to polar residues over residues 1244 to 1254 and 1304 to 1328; these read GSWTSCSSGSH and YSRQ…SSTG. The segment covering 1475–1486 has biased composition (acidic residues); sequence AEEDEDEQVSAV.

This sequence belongs to the RAPGEF2 family. In terms of assembly, found in a complex, at least composed of KIDINS220, MAGI2, NTRK1 and RAPGEF2; the complex is mainly formed at late endosomes in a neuronal growth factor (NGF)-dependent manner. Interacts (via C-terminal domain) with NEDD4 (via WW domains); this interaction leads to ubiquitination and degradation via the proteasome pathway in a cAMP-independent manner. Interacts with MAGI1 (via PDZ domain). Interacts with ADRB1 (via C-terminal PDZ motif); the interaction is direct. Interacts (via Ras-associating domain) with RAP1A (via GTP-bound active form). Interacts weakly with HRAS (via GDP- and GTP-bound forms). Interacts (via C-terminal domain) with MAGI2 (via PDZ and WW domains). Interacts with CDH1 and TJP1. Interacts with CTNNB1. In terms of processing, ubiquitinated by NEDD4, leading to proteasomal degradation. Post-translationally, phosphorylation by PLK2 promotes its activity.

It is found in the cytoplasm. It localises to the perinuclear region. The protein resides in the cell membrane. Its subcellular location is the late endosome. The protein localises to the cell junction. Functions as a guanine nucleotide exchange factor (GEF), which activates Rap and Ras family of small GTPases by exchanging bound GDP for free GTP in a cAMP-dependent manner. Serves as a link between cell surface receptors and Rap/Ras GTPases in intracellular signaling cascades. Also acts as an effector for Rap1 by direct association with Rap1-GTP thereby leading to the amplification of Rap1-mediated signaling. Shows weak activity on HRAS. It is controversial whether RAPGEF2 binds cAMP and cGMP or not. Its binding to ligand-activated beta-1 adrenergic receptor ADRB1 leads to the Ras activation through the G(s)-alpha signaling pathway. Involved in the cAMP-induced Ras and Erk1/2 signaling pathway that leads to sustained inhibition of long term melanogenesis by reducing dendrite extension and melanin synthesis. Also provides inhibitory signals for cell proliferation of melanoma cells and promotes their apoptosis in a cAMP-independent nanner. Regulates cAMP-induced neuritogenesis by mediating the Rap1/B-Raf/ERK signaling through a pathway that is independent on both PKA and RAPGEF3/RAPGEF4. Involved in neuron migration and in the formation of the major forebrain fiber connections forming the corpus callosum, the anterior commissure and the hippocampal commissure during brain development. Involved in neuronal growth factor (NGF)-induced sustained activation of Rap1 at late endosomes and in brain-derived neurotrophic factor (BDNF)-induced axon outgrowth of hippocampal neurons. Plays a role in the regulation of embryonic blood vessel formation and in the establishment of basal junction integrity and endothelial barrier function. May be involved in the regulation of the vascular endothelial growth factor receptor KDR and cadherin CDH5 expression at allantois endothelial cell-cell junctions. Binds to cAMP. In Bos taurus (Bovine), this protein is Rap guanine nucleotide exchange factor 2 (RAPGEF2).